The sequence spans 105 residues: Protein LITTLE ZIPPER 2 (105 aa).

A disordered region spans residues 1 to 20 (MCLTTSEPPFPDTDTPTMRS). A coiled-coil region spans residues 39–60 (NLTRRRRLLKEQKEMEMRNLKL).

Interacts with REV.

Its function is as follows. Competitive inhibitor of the HD-ZIPIII transcription factors in shoot apical meristem (SAM) development. Acts by forming non-functional heterodimers. Part of a negative feedback loop. Essential for proper functioning of stem cells in the SAM. This chain is Protein LITTLE ZIPPER 2, found in Arabidopsis thaliana (Mouse-ear cress).